The following is a 519-amino-acid chain: Glucoamylase GLU1 (519 aa).

The signal sequence occupies residues 1 to 27 (MKFGVLFSVFAAIVSALPLQEGPLNKR). N-linked (GlcNAc...) asparagine glycosylation is found at Asn115 and Asn127. Trp166 serves as a coordination point for substrate. A glycan (N-linked (GlcNAc...) asparagine) is linked at Asn205. Catalysis depends on Asp234, which acts as the Proton acceptor. Glu237 (proton donor) is an active-site residue.

This sequence belongs to the glycosyl hydrolase 15 family.

It carries out the reaction Hydrolysis of terminal (1-&gt;4)-linked alpha-D-glucose residues successively from non-reducing ends of the chains with release of beta-D-glucose.. The sequence is that of Glucoamylase GLU1 (GLU1) from Saccharomycopsis fibuligera (Yeast).